The chain runs to 85 residues: Large ribosomal subunit protein bL27 (85 aa).

Residues 1–22 form a disordered region; it reads MAHKKGASSTRNGRDSNAQRLG. Positions 7–19 are enriched in polar residues; sequence ASSTRNGRDSNAQ.

This sequence belongs to the bacterial ribosomal protein bL27 family.

The sequence is that of Large ribosomal subunit protein bL27 (rpmA) from Streptomyces griseus.